A 621-amino-acid chain; its full sequence is Chaperone protein HscA homolog (621 aa).

It belongs to the heat shock protein 70 family.

Its function is as follows. Chaperone involved in the maturation of iron-sulfur cluster-containing proteins. Has a low intrinsic ATPase activity which is markedly stimulated by HscB. This chain is Chaperone protein HscA homolog, found in Cupriavidus metallidurans (strain ATCC 43123 / DSM 2839 / NBRC 102507 / CH34) (Ralstonia metallidurans).